Reading from the N-terminus, the 356-residue chain is UDP-N-acetylglucosamine--N-acetylmuramyl-(pentapeptide) pyrophosphoryl-undecaprenol N-acetylglucosamine transferase (356 aa).

UDP-N-acetyl-alpha-D-glucosamine-binding positions include 12-14, Arg166, Ser196, and Gln291; that span reads TAG.

Belongs to the glycosyltransferase 28 family. MurG subfamily.

The protein localises to the cell membrane. The catalysed reaction is di-trans,octa-cis-undecaprenyl diphospho-N-acetyl-alpha-D-muramoyl-L-alanyl-D-glutamyl-meso-2,6-diaminopimeloyl-D-alanyl-D-alanine + UDP-N-acetyl-alpha-D-glucosamine = di-trans,octa-cis-undecaprenyl diphospho-[N-acetyl-alpha-D-glucosaminyl-(1-&gt;4)]-N-acetyl-alpha-D-muramoyl-L-alanyl-D-glutamyl-meso-2,6-diaminopimeloyl-D-alanyl-D-alanine + UDP + H(+). Its pathway is cell wall biogenesis; peptidoglycan biosynthesis. In terms of biological role, cell wall formation. Catalyzes the transfer of a GlcNAc subunit on undecaprenyl-pyrophosphoryl-MurNAc-pentapeptide (lipid intermediate I) to form undecaprenyl-pyrophosphoryl-MurNAc-(pentapeptide)GlcNAc (lipid intermediate II). The protein is UDP-N-acetylglucosamine--N-acetylmuramyl-(pentapeptide) pyrophosphoryl-undecaprenol N-acetylglucosamine transferase of Geobacillus thermodenitrificans (strain NG80-2).